The primary structure comprises 337 residues: Tryptophan--tRNA ligase (337 aa).

Residues 11 to 13 (QPT) and 19 to 20 (GN) contribute to the ATP site. The 'HIGH' region signature appears at 12 to 20 (PTGALHLGN). Asp135 lines the L-tryptophan pocket. Residues 147–149 (GED), Val191, and 200–204 (KMSKS) each bind ATP. Positions 200–204 (KMSKS) match the 'KMSKS' region motif.

Belongs to the class-I aminoacyl-tRNA synthetase family. As to quaternary structure, homodimer.

The protein localises to the cytoplasm. It catalyses the reaction tRNA(Trp) + L-tryptophan + ATP = L-tryptophyl-tRNA(Trp) + AMP + diphosphate + H(+). Its function is as follows. Catalyzes the attachment of tryptophan to tRNA(Trp). This Parasynechococcus marenigrum (strain WH8102) protein is Tryptophan--tRNA ligase.